Consider the following 428-residue polypeptide: Enolase (428 aa).

Gln-173 provides a ligand contact to (2R)-2-phosphoglycerate. The Proton donor role is filled by Glu-217. Asp-253, Glu-294, and Asp-320 together coordinate Mg(2+). (2R)-2-phosphoglycerate-binding residues include Lys-345, Arg-374, Ser-375, and Lys-396. Catalysis depends on Lys-345, which acts as the Proton acceptor.

The protein belongs to the enolase family. Mg(2+) serves as cofactor.

It is found in the cytoplasm. The protein resides in the secreted. It localises to the cell surface. The enzyme catalyses (2R)-2-phosphoglycerate = phosphoenolpyruvate + H2O. It functions in the pathway carbohydrate degradation; glycolysis; pyruvate from D-glyceraldehyde 3-phosphate: step 4/5. Catalyzes the reversible conversion of 2-phosphoglycerate (2-PG) into phosphoenolpyruvate (PEP). It is essential for the degradation of carbohydrates via glycolysis. The sequence is that of Enolase from Methanosarcina barkeri (strain Fusaro / DSM 804).